A 153-amino-acid polypeptide reads, in one-letter code: Small heat shock protein ibp (153 aa).

The region spanning 35–153 (KIISDSVPPY…KIQKIQINVK (119 aa)) is the sHSP domain.

The protein belongs to the small heat shock protein (HSP20) family.

This Buchnera aphidicola subsp. Thelaxes suberi protein is Small heat shock protein ibp (ibp).